We begin with the raw amino-acid sequence, 358 residues long: Heme A synthase (358 aa).

Transmembrane regions (helical) follow at residues 22 to 42, 107 to 127, 139 to 159, 173 to 193, 208 to 228, 269 to 289, 302 to 322, and 324 to 344; these read IQVW…VGGA, ILGR…WATK, IVPI…ASGI, AFHL…SRGF, FAGW…LVAG, FIHR…AFYV, AFFI…TLLR, and VPIG…CFSV. H271 is a binding site for heme. H332 lines the heme pocket.

The protein belongs to the COX15/CtaA family. Type 2 subfamily. In terms of assembly, interacts with CtaB. Heme b serves as cofactor.

The protein localises to the cell membrane. The enzyme catalyses Fe(II)-heme o + 2 A + H2O = Fe(II)-heme a + 2 AH2. It functions in the pathway porphyrin-containing compound metabolism; heme A biosynthesis; heme A from heme O: step 1/1. Catalyzes the conversion of heme O to heme A by two successive hydroxylations of the methyl group at C8. The first hydroxylation forms heme I, the second hydroxylation results in an unstable dihydroxymethyl group, which spontaneously dehydrates, resulting in the formyl group of heme A. The protein is Heme A synthase of Bartonella quintana (strain Toulouse) (Rochalimaea quintana).